The sequence spans 396 residues: Chalcone synthase (396 aa).

The active site involves C167.

Belongs to the thiolase-like superfamily. Chalcone/stilbene synthases family.

It carries out the reaction (E)-4-coumaroyl-CoA + 3 malonyl-CoA + 3 H(+) = 2',4,4',6'-tetrahydroxychalcone + 3 CO2 + 4 CoA. Its pathway is secondary metabolite biosynthesis; flavonoid biosynthesis. Its function is as follows. The primary product of this enzyme is 4,2',4',6'-tetrahydroxychalcone (also termed naringenin-chalcone or chalcone) which can under specific conditions spontaneously isomerize into naringenin. This chain is Chalcone synthase (CHS), found in Chrysosplenium americanum (American golden saxifrage).